The sequence spans 207 residues: Tereporin-Ts1 (207 aa).

The signal sequence occupies residues 1–11 (VIFALVLGNAS). An N-terminal region region spans residues 35-54 (SAGTSLASTILSGLAASGYR). Residues Gly-111, Ser-129, Pro-131, Tyr-164, and Tyr-165 each coordinate phosphocholine.

The protein belongs to the actinoporin family. Conoidea subfamily. In terms of assembly, octamer or nonamer in membranes. Monomer in the soluble state. In terms of tissue distribution, expressed by the venom duct.

The protein resides in the secreted. Its subcellular location is the nematocyst. It localises to the target cell membrane. In terms of biological role, pore-forming protein that forms pores of around 1 nm and causes cardiac stimulation and cytolysis. The protein is Tereporin-Ts1 of Terebra subulata (Chocolate spotted auger).